Reading from the N-terminus, the 304-residue chain is Small glutamine-rich tetratricopeptide repeat-containing protein beta (304 aa).

TPR repeat units lie at residues Leu15–Asp49, Ala85–Asn118, Ala119–Tyr152, and Ser153–Asn186. Position 131 is an N6-acetyllysine (Lys131). A phosphoserine mark is found at Ser293, Ser295, and Ser297.

Belongs to the SGT family. In terms of assembly, homooligomerize.

Its function is as follows. Co-chaperone that binds directly to HSC70 and HSP70 and regulates their ATPase activity. The polypeptide is Small glutamine-rich tetratricopeptide repeat-containing protein beta (SGTB) (Homo sapiens (Human)).